We begin with the raw amino-acid sequence, 643 residues long: Sodium-dependent nutrient amino acid transporter 1 (643 aa).

Positions 1–38 (MELKGVQPSNGSPNGNGNGATNAASTEKTDAEKPTAER) are disordered. Residues 1-40 (MELKGVQPSNGSPNGNGNGATNAASTEKTDAEKPTAERTN) lie on the Cytoplasmic side of the membrane. Positions 8 to 26 (PSNGSPNGNGNGATNAAST) are enriched in low complexity. Residues 27–36 (EKTDAEKPTA) show a composition bias toward basic and acidic residues. 3 consecutive transmembrane segments (helical) span residues 41 to 61 (WGNG…LGNV), 74 to 94 (GAFL…MYYL), and 111 to 131 (SVVP…ICII). Asn-185, Asn-190, and Asn-200 each carry an N-linked (GlcNAc...) asparagine glycan. Transmembrane regions (helical) follow at residues 231–251 (PDWK…LVIM), 260–280 (AAYF…IRAV), 309–329 (AVVQ…MFAS), 343–363 (IVTT…FAIL), 403–423 (LFSV…IVAL), 449–469 (VCGF…ILTL), 476–496 (TYVV…VYGL), 518–538 (CWSF…MATI), and 554–574 (VAGW…GLWY).

This sequence belongs to the sodium:neurotransmitter symporter (SNF) (TC 2.A.22) family.

Its subcellular location is the membrane. Unusual broad substrate spectrum amino acid:sodium cotransporter that promotes absorption of the D isomers of essential amino acids. Neutral amino acids are the preferred substrates, especially methionine and phenylalanine. The chain is Sodium-dependent nutrient amino acid transporter 1 from Drosophila simulans (Fruit fly).